A 614-amino-acid chain; its full sequence is Protein YehQ (614 aa).

2 SWIM-type zinc fingers span residues 55 to 89 (VRTQ…LSYQ) and 151 to 185 (SDVR…QAFV).

This Escherichia coli (strain K12) protein is Protein YehQ (yehQ).